Reading from the N-terminus, the 32-residue chain is MSDIN-like toxin proprotein 1 (32 aa).

A propeptide spanning residues 1–10 is cleaved from the precursor; it reads MSDINATRLP. The cyclopeptide (Ile-Pro) cross-link spans 11–18; that stretch reads IFWFIYFP. The propeptide occupies 19–32; that stretch reads CVSDVDSTLTRGER.

It belongs to the MSDIN fungal toxin family. Post-translationally, processed by the macrocyclase-peptidase enzyme POPB to yield a toxic cyclic octapeptide. POPB first removes 10 residues from the N-terminus. Conformational trapping of the remaining peptide forces the enzyme to release this intermediate rather than proceed to macrocyclization. The enzyme rebinds the remaining peptide in a different conformation and catalyzes macrocyclization of the N-terminal 8 residues. As to expression, expressed in basidiocarps.

Functionally, probable toxin that belongs to the MSDIN-like toxin family responsible for a large number of food poisoning cases and deaths. In Amanita exitialis (Guangzhou destroying angel), this protein is MSDIN-like toxin proprotein 1.